A 365-amino-acid chain; its full sequence is DNA replication and repair protein RecF (365 aa).

ATP is bound at residue 23-30; sequence GPNGIGKS.

It belongs to the RecF family.

It is found in the cytoplasm. In terms of biological role, the RecF protein is involved in DNA metabolism; it is required for DNA replication and normal SOS inducibility. RecF binds preferentially to single-stranded, linear DNA. It also seems to bind ATP. The chain is DNA replication and repair protein RecF from Parasynechococcus marenigrum (strain WH8102).